A 110-amino-acid chain; its full sequence is SOSS complex subunit C (110 aa).

Belongs to the SOSS-C family. As to quaternary structure, belongs to the multiprotein complex Integrator. Component of the SOSS complex, composed of soss-b (soss-b1/nabp2 or soss-b2/nabp1), soss-a/ints3 and soss-c/inip.

It localises to the nucleus. Component of the SOSS complex, a multiprotein complex that functions downstream of the MRN complex to promote DNA repair and G2/M checkpoint. The SOSS complex associates with single-stranded DNA at DNA lesions and influences diverse endpoints in the cellular DNA damage response including cell-cycle checkpoint activation, recombinational repair and maintenance of genomic stability. Required for efficient homologous recombination-dependent repair of double-strand breaks (DSBs). This is SOSS complex subunit C (inip) from Xenopus laevis (African clawed frog).